Reading from the N-terminus, the 469-residue chain is Sulfate adenylyltransferase subunit 1 (469 aa).

A tr-type G domain is found at 22–237 (KEVLRFITCG…LEEVPVKSEE (216 aa)). The G1 stretch occupies residues 31 to 38 (GSVDDGKS). 31–38 (GSVDDGKS) contributes to the GTP binding site. The interval 89-93 (GITID) is G2. The interval 110 to 113 (DTPG) is G3. GTP contacts are provided by residues 110-114 (DTPGH) and 165-168 (NKMD). The tract at residues 165–168 (NKMD) is G4. Positions 202-204 (SAK) are G5.

Belongs to the TRAFAC class translation factor GTPase superfamily. Classic translation factor GTPase family. CysN/NodQ subfamily. As to quaternary structure, heterodimer composed of CysD, the smaller subunit, and CysN.

It catalyses the reaction sulfate + ATP + H(+) = adenosine 5'-phosphosulfate + diphosphate. It participates in sulfur metabolism; hydrogen sulfide biosynthesis; sulfite from sulfate: step 1/3. With CysD forms the ATP sulfurylase (ATPS) that catalyzes the adenylation of sulfate producing adenosine 5'-phosphosulfate (APS) and diphosphate, the first enzymatic step in sulfur assimilation pathway. APS synthesis involves the formation of a high-energy phosphoric-sulfuric acid anhydride bond driven by GTP hydrolysis by CysN coupled to ATP hydrolysis by CysD. This chain is Sulfate adenylyltransferase subunit 1, found in Methylorubrum extorquens (strain CM4 / NCIMB 13688) (Methylobacterium extorquens).